Reading from the N-terminus, the 407-residue chain is E3 ubiquitin-protein ligase TRIM13 (407 aa).

The segment at C10–R58 adopts an RING-type zinc-finger fold. The B box-type zinc finger occupies P89 to I131. 4 residues coordinate Zn(2+): C94, H97, C117, and H123. The stretch at L172–I200 forms a coiled coil. The chain crosses the membrane as a helical span at residues L316–L336.

In terms of assembly, interacts (via C-terminal domain) with VCP. Interacts with AKT1; the interaction ubiquitinates AKT1 and leads to its proteasomal degradation. Interacts with MDM2; the interaction ubiquitinates AKT1 and leads to its proteasomal degradation. Interacts with p62/SQSTM1. Interacts with TRAF6. Interacts with IKBKG/NEMO. Post-translationally, auto-ubiquitinated; requires the RING-type zinc finger. Auto-polyubiquitination leads to proteasomal degradation.

It localises to the endoplasmic reticulum membrane. The catalysed reaction is S-ubiquitinyl-[E2 ubiquitin-conjugating enzyme]-L-cysteine + [acceptor protein]-L-lysine = [E2 ubiquitin-conjugating enzyme]-L-cysteine + N(6)-ubiquitinyl-[acceptor protein]-L-lysine.. It participates in protein modification; protein ubiquitination. Its function is as follows. Endoplasmic reticulum (ER) membrane anchored E3 ligase involved in the retrotranslocation and turnover of membrane and secretory proteins from the ER through a set of processes named ER-associated degradation (ERAD). This process acts on misfolded proteins as well as in the regulated degradation of correctly folded proteins. Enhances ionizing radiation-induced p53/TP53 stability and apoptosis via ubiquitinating MDM2 and AKT1 and decreasing AKT1 kinase activity through MDM2 and AKT1 proteasomal degradation. Regulates ER stress-induced autophagy, and may act as a tumor suppressor. Also plays a role in innate immune response by stimulating NF-kappa-B activity in the TLR2 signaling pathway. Ubiquitinates TRAF6 via the 'Lys-29'-linked polyubiquitination chain resulting in NF-kappa-B activation. Participates as well in T-cell receptor-mediated NF-kappa-B activation. In the presence of TNF, modulates the IKK complex by regulating IKBKG/NEMO ubiquitination leading to the repression of NF-kappa-B. In Rattus norvegicus (Rat), this protein is E3 ubiquitin-protein ligase TRIM13 (Trim13).